Consider the following 343-residue polypeptide: N-acetyl-gamma-glutamyl-phosphate reductase (343 aa).

Residue C147 is part of the active site.

This sequence belongs to the NAGSA dehydrogenase family. Type 1 subfamily.

It is found in the cytoplasm. The catalysed reaction is N-acetyl-L-glutamate 5-semialdehyde + phosphate + NADP(+) = N-acetyl-L-glutamyl 5-phosphate + NADPH + H(+). It participates in amino-acid biosynthesis; L-arginine biosynthesis; N(2)-acetyl-L-ornithine from L-glutamate: step 3/4. Catalyzes the NADPH-dependent reduction of N-acetyl-5-glutamyl phosphate to yield N-acetyl-L-glutamate 5-semialdehyde. This chain is N-acetyl-gamma-glutamyl-phosphate reductase, found in Staphylococcus saprophyticus subsp. saprophyticus (strain ATCC 15305 / DSM 20229 / NCIMB 8711 / NCTC 7292 / S-41).